Reading from the N-terminus, the 451-residue chain is Cobyrinate a,c-diamide synthase (451 aa).

The GATase cobBQ-type domain maps to 246 to 437; sequence KIGVAYDEVF…VHTHVAAMPN (192 aa). Cys328 (nucleophile) is an active-site residue.

It belongs to the CobB/CbiA family. The cofactor is Mg(2+).

The catalysed reaction is cob(II)yrinate + 2 L-glutamine + 2 ATP + 2 H2O = cob(II)yrinate a,c diamide + 2 L-glutamate + 2 ADP + 2 phosphate + 2 H(+). It catalyses the reaction Ni-sirohydrochlorin + 2 L-glutamine + 2 ATP + 2 H2O = Ni-sirohydrochlorin a,c-diamide + 2 L-glutamate + 2 ADP + 2 phosphate + 2 H(+). It participates in cofactor biosynthesis; adenosylcobalamin biosynthesis; cob(II)yrinate a,c-diamide from sirohydrochlorin (anaerobic route): step 10/10. Functionally, catalyzes the ATP-dependent amidation of the two carboxylate groups at positions a and c of cobyrinate, using either L-glutamine or ammonia as the nitrogen source. Involved in the biosynthesis of the unique nickel-containing tetrapyrrole coenzyme F430, the prosthetic group of methyl-coenzyme M reductase (MCR), which plays a key role in methanogenesis and anaerobic methane oxidation. Catalyzes the ATP-dependent amidation of the two carboxylate groups at positions a and c of Ni-sirohydrochlorin, using L-glutamine or ammonia as the nitrogen source. This Methanobrevibacter smithii (strain ATCC 35061 / DSM 861 / OCM 144 / PS) protein is Cobyrinate a,c-diamide synthase.